Here is a 133-residue protein sequence, read N- to C-terminus: Putative actin-depolymerizing factor 11 (133 aa).

The 133-residue stretch at 1–133 (MVLHDDCKLT…SLDAIRRRIN (133 aa)) folds into the ADF-H domain.

This sequence belongs to the actin-binding proteins ADF family.

It localises to the cytoplasm. The protein localises to the cytoskeleton. In terms of biological role, actin-depolymerizing protein. Severs actin filaments (F-actin) and binds to actin monomers. The polypeptide is Putative actin-depolymerizing factor 11 (ADF11) (Arabidopsis thaliana (Mouse-ear cress)).